Reading from the N-terminus, the 92-residue chain is Probable acyl carrier protein (92 aa).

The 82-residue stretch at 11-92 folds into the Carrier domain; that stretch reads QVTFEELSAL…QVNATLRTAV (82 aa). Ser-49 carries the post-translational modification O-(pantetheine 4'-phosphoryl)serine.

In terms of processing, 4'-phosphopantetheine is transferred from CoA to a specific serine of the apo-ACP-like protein.

Functionally, involved in developmentally regulated synthesis of a compound biosynthetically related to polyketide antibiotics which is essential for spore color in Streptomyces halstedii. This Streptomyces halstedii protein is Probable acyl carrier protein (sch3).